A 459-amino-acid chain; its full sequence is Glutamyl-tRNA reductase (459 aa).

Substrate contacts are provided by residues 49-52 (TCNR), Ser-109, 114-116 (ETQ), and Gln-120. The active-site Nucleophile is Cys-50. 189–194 (GAGKMG) is a binding site for NADP(+).

The protein belongs to the glutamyl-tRNA reductase family. In terms of assembly, homodimer.

The enzyme catalyses (S)-4-amino-5-oxopentanoate + tRNA(Glu) + NADP(+) = L-glutamyl-tRNA(Glu) + NADPH + H(+). It participates in porphyrin-containing compound metabolism; protoporphyrin-IX biosynthesis; 5-aminolevulinate from L-glutamyl-tRNA(Glu): step 1/2. Its function is as follows. Catalyzes the NADPH-dependent reduction of glutamyl-tRNA(Glu) to glutamate 1-semialdehyde (GSA). This is Glutamyl-tRNA reductase from Halalkalibacterium halodurans (strain ATCC BAA-125 / DSM 18197 / FERM 7344 / JCM 9153 / C-125) (Bacillus halodurans).